A 1097-amino-acid polypeptide reads, in one-letter code: MMNISLRLRRPPWMVDSNGRRMTSHFQWLLLTFILLYLMNQVTSEKRGAPRDLKCITNNLRVWDCSWKAPSAAGHGTVYEICIENRSHSCYQSEKTNTKIPALLPGDHEITINRLYDFGNPISKFTLNEKNVSLIPDTPEILNLSADFSTSTIHLKWNDRGSVFPHQLTVIWEIKILRKENMEIVKLITHNTTVNGKDTVHHWSWTSDMPLECAIHSVGIRCYVDDPHFSGRKEWSDWSPLKNISWSPDSQTKVFPQDKVILVGSDITFCCVTQEKVLSAQIGQTNCPLIHLDGENVAIKIHNISVSANSGTNVVFTTEDNIFGTVIFVGYPPDIPQKVNCETYDLKEIVCTWNPGRPTALVGPRNTSYTLFESFSGKYVRFKRVEAPTNESYQLFFQMRPNQEIYNFTLNARNPLGRSESTILINITEKVYPRIPTSIKVKDINSTAVMLSWHLPGNFAKIKLLCQIEINKTNSVQELRNVTIKGVENSSYLVAVDKLNPYTIYTFRIRCSTETFWKWSKWSNEKKYLTTEAIPSKGPDTWREWSSDGKNLIIYWKPLPINEANGKILSYNVSCSLDEETQSLSEIPDPQHKAELQLDKNDYIISVVAKNSVGSSPPSKIASMEIPNDDLKVEQAVGMGNGILLTWNYDPNMTCDYVIKWCNSSRSEPCLMDWKKVPSNSTEAVIESDQFRPGVRYSFFLYGCRNEGYQLLRSIIGYIEELAPIVAPNFTVEDTSADSILVKWEDIPVEELRGFLRGYLFYFEKGERDTSKIRGLESGRSDIKVKNITDLSQKTLRIADLQGKTSYHLVLRAYTDGGMGPEKSMFVVTKENSVGLIIAILIPVAVAVIVGVVTSILCYRKREWIKETFYPDIPNPENCKALQFQKSVCEGNSALKTLEMNPCTPNNVEVLETRSAVPKIEDTEIISPIAERPEESSDAEAENHVVVSYCPPVIEEETPNPGADEAGGASQVVYIDIQSMYQPQAKPEEEQENDPVGGAGYKPQMHLPVTSTVEDLAAEDDLDKAAGYRPQANVNTWNLVSPDSPRSTDSNSEIVSFGSPCSINSRQFLIPPKDEDSPKSSGGGWSFTNFFQNKPND.

The N-terminal stretch at 1–44 (MMNISLRLRRPPWMVDSNGRRMTSHFQWLLLTFILLYLMNQVTS) is a signal peptide. Topologically, residues 45–833 (EKRGAPRDLK…SMFVVTKENS (789 aa)) are extracellular. The region spanning 46-131 (KRGAPRDLKC…ISKFTLNEKN (86 aa)) is the Fibronectin type-III 1 domain. 2 cysteine pairs are disulfide-bonded: Cys55–Cys65 and Cys82–Cys90. 6 N-linked (GlcNAc...) asparagine glycosylation sites follow: Asn85, Asn131, Asn143, Asn191, Asn243, and Asn303. Cys213 and Cys270 form a disulfide bridge. Fibronectin type-III domains follow at residues 332–434 (PPDI…VYPR), 435–534 (IPTS…TEAI), 538–629 (GPDT…IPND), 627–719 (PNDD…IGYI), and 724–833 (PIVA…KENS). A disulfide bond links Cys341 and Cys351. N-linked (GlcNAc...) asparagine glycans are attached at residues Asn366, Asn390, Asn407, Asn426, Asn445, Asn471, Asn481, and Asn489. An intrachain disulfide couples Cys466 to Cys511. Residues 519–523 (WSKWS) carry the WSXWS motif motif. N-linked (GlcNAc...) asparagine glycans are attached at residues Asn572, Asn652, Asn663, Asn680, Asn729, and Asn787. The chain crosses the membrane as a helical span at residues 834-854 (VGLIIAILIPVAVAVIVGVVT). Over 855–1097 (SILCYRKREW…TNFFQNKPND (243 aa)) the chain is Cytoplasmic. Positions 869 to 877 (FYPDIPNPE) match the Box 1 motif motif. At Ser927 the chain carries Phosphoserine. 2 disordered regions span residues 982 to 1005 (QPQA…KPQM) and 1022 to 1097 (LDKA…KPND). Polar residues-rich tracts occupy residues 1032–1067 (ANVN…NSRQ) and 1086–1097 (SFTNFFQNKPND). Ser1044 is modified (phosphoserine).

This sequence belongs to the type I cytokine receptor family. Type 2 subfamily. Heterodimer composed of LIFR and IL6ST. The heterodimer formed by LIFR and IL6ST interacts with the complex formed by CNTF and CNTFR.

Its subcellular location is the cell membrane. Its function is as follows. Signal-transducing molecule. May have a common pathway with IL6ST. The soluble form inhibits the biological activity of LIF by blocking its binding to receptors on target cells. The polypeptide is Leukemia inhibitory factor receptor (LIFR) (Canis lupus familiaris (Dog)).